Reading from the N-terminus, the 353-residue chain is Chorismate synthase (353 aa).

NADP(+) is bound at residue arginine 48. Residues 125–127 (RSS), 238–239 (NA), glycine 278, 293–297 (KPTSS), and arginine 319 each bind FMN.

It belongs to the chorismate synthase family. In terms of assembly, homotetramer. The cofactor is FMNH2.

The enzyme catalyses 5-O-(1-carboxyvinyl)-3-phosphoshikimate = chorismate + phosphate. Its pathway is metabolic intermediate biosynthesis; chorismate biosynthesis; chorismate from D-erythrose 4-phosphate and phosphoenolpyruvate: step 7/7. In terms of biological role, catalyzes the anti-1,4-elimination of the C-3 phosphate and the C-6 proR hydrogen from 5-enolpyruvylshikimate-3-phosphate (EPSP) to yield chorismate, which is the branch point compound that serves as the starting substrate for the three terminal pathways of aromatic amino acid biosynthesis. This reaction introduces a second double bond into the aromatic ring system. The sequence is that of Chorismate synthase from Buchnera aphidicola subsp. Cinara cedri (strain Cc).